A 1072-amino-acid chain; its full sequence is Carbamoyl phosphate synthase large chain (1072 aa).

The tract at residues 1–401 (MPKYKDINKV…SLLKAVRSLE (401 aa)) is carboxyphosphate synthetic domain. R129, R169, G175, G176, K208, L210, E215, G241, V242, H243, Q284, and E298 together coordinate ATP. The ATP-grasp 1 domain occupies 133-327 (KRKMQEIGEP…IAKVAAKIAI (195 aa)). Positions 284, 298, and 300 each coordinate Mg(2+). The Mn(2+) site is built by Q284, E298, and N300. An oligomerization domain region spans residues 402–544 (IKAYGLRLNN…YIYSTYGEED (143 aa)). The tract at residues 545–929 (EVEIHEIPKV…ALYKALEGAG (385 aa)) is carbamoyl phosphate synthetic domain. Residues 671 to 861 (SKLLKELNIN…MVKLAVEVAL (191 aa)) form the ATP-grasp 2 domain. Residues R707, K746, I748, E752, G777, V778, H779, S780, Q820, and E832 each coordinate ATP. Mg(2+) is bound by residues Q820, E832, and N834. Residues Q820, E832, and N834 each contribute to the Mn(2+) site. The 143-residue stretch at 930 to 1072 (LKIPKKGKIL…QKDNVKNLVL (143 aa)) folds into the MGS-like domain. The segment at 930–1072 (LKIPKKGKIL…QKDNVKNLVL (143 aa)) is allosteric domain.

This sequence belongs to the CarB family. As to quaternary structure, composed of two chains; the small (or glutamine) chain promotes the hydrolysis of glutamine to ammonia, which is used by the large (or ammonia) chain to synthesize carbamoyl phosphate. Tetramer of heterodimers (alpha,beta)4. The cofactor is Mg(2+). It depends on Mn(2+) as a cofactor.

The enzyme catalyses hydrogencarbonate + L-glutamine + 2 ATP + H2O = carbamoyl phosphate + L-glutamate + 2 ADP + phosphate + 2 H(+). The catalysed reaction is hydrogencarbonate + NH4(+) + 2 ATP = carbamoyl phosphate + 2 ADP + phosphate + 2 H(+). It participates in amino-acid biosynthesis; L-arginine biosynthesis; carbamoyl phosphate from bicarbonate: step 1/1. Its pathway is pyrimidine metabolism; UMP biosynthesis via de novo pathway; (S)-dihydroorotate from bicarbonate: step 1/3. Functionally, large subunit of the glutamine-dependent carbamoyl phosphate synthetase (CPSase). CPSase catalyzes the formation of carbamoyl phosphate from the ammonia moiety of glutamine, carbonate, and phosphate donated by ATP, constituting the first step of 2 biosynthetic pathways, one leading to arginine and/or urea and the other to pyrimidine nucleotides. The large subunit (synthetase) binds the substrates ammonia (free or transferred from glutamine from the small subunit), hydrogencarbonate and ATP and carries out an ATP-coupled ligase reaction, activating hydrogencarbonate by forming carboxy phosphate which reacts with ammonia to form carbamoyl phosphate. This Thermoanaerobacter sp. (strain X514) protein is Carbamoyl phosphate synthase large chain.